Here is a 350-residue protein sequence, read N- to C-terminus: Twinfilin-1 (350 aa).

ADF-H domains follow at residues 4–139 and 177–313; these read QTGI…KYLA and GIAF…EEVH. The interval 316–350 is disordered; sequence QHAHKQNFAKPKGPAGKRGIRRLIRGPAEAETAND.

The protein belongs to the actin-binding proteins ADF family. Twinfilin subfamily. Interacts with G-actin; ADP-actin form.

It localises to the cytoplasm. The protein localises to the cytoskeleton. Actin-binding protein involved in motile and morphological processes. Inhibits actin polymerization, likely by sequestering G-actin. This is Twinfilin-1 (twf1) from Xenopus tropicalis (Western clawed frog).